Here is a 1220-residue protein sequence, read N- to C-terminus: Plasma membrane calcium-transporting ATPase 1 (1220 aa).

Gly-2 carries the post-translational modification N-acetylglycine. At 2–105 (GDMANNSVVY…KTFLQLVWEA (104 aa)) the chain is on the cytoplasmic side. 2 positions are modified to phosphoserine: Ser-8 and Ser-17. Residues 106-126 (LQDVTLIILEIAAIVSLGLSF) traverse the membrane as a helical segment. Topologically, residues 127–154 (YQPPEGDNALCGEVSVGEEEGEGETGWI) are extracellular. Residues 155–175 (EGAAILLSVVCVVLVTAFNDW) traverse the membrane as a helical segment. Topologically, residues 176 to 366 (SKEKQFRGLQ…KEKSVLQGKL (191 aa)) are cytoplasmic. The tract at residues 297–356 (EEEKKDEKKKEKKNKKQDGAIENRNKAKAQDGEPMEMQPLKSEEGGDGDEKDKKKANLPK) is disordered. 2 stretches are compositionally biased toward basic and acidic residues: residues 312–327 (KQDGAIENRNKAKAQD) and 337–356 (KSEEGGDGDEKDKKKANLPK). Phosphoserine is present on Ser-338. A helical transmembrane segment spans residues 367-386 (TKLAVQIGKAGLLMSAITVI). Residues 387-418 (ILVLYFLIDTFWVQKRPWLAECTPIYIQYFVK) lie on the Extracellular side of the membrane. Residues 419–439 (FFIIGVTVLVVAVPEGLPLPV) form a helical membrane-spanning segment. Residues 440–855 (TISLAYSVNE…RNVYDSISKF (416 aa)) are Cytoplasmic-facing. Asp-475 functions as the 4-aspartylphosphate intermediate in the catalytic mechanism. The Mg(2+) site is built by Asp-475, Thr-477, and Asp-797. A helical transmembrane segment spans residues 856–876 (LQFQLTVNVVAVIVAFTGACI). The Extracellular segment spans residues 877 to 882 (TQDSPL). Residues 883–903 (KAVQMLWVNLIMDTLASLALA) form a helical membrane-spanning segment. Over 904–927 (TEPPTESLLLGKPYGRNKPLISRT) the chain is Cytoplasmic. Residues 928-948 (MMKNILGHAFYQLVVVFTLLL) traverse the membrane as a helical segment. Residues 949–971 (AGEKFFDIDSGRNAPLHAPPSEH) are Extracellular-facing. The chain crosses the membrane as a helical span at residues 972 to 991 (YTIVFNIFVLMQLFNEINAR). Residues 992–1005 (KIHGERNVFEGIFN) lie on the Cytoplasmic side of the membrane. Residues 1006–1027 (NAIFCTIVLGTFVVQIIIVQFA) form a helical membrane-spanning segment. Residues 1028–1039 (GKPFSCSELSVE) are Extracellular-facing. A helical membrane pass occupies residues 1040–1060 (QWLWSIFLGMGTLLWGQLIST). The Cytoplasmic portion of the chain corresponds to 1061–1220 (IPTSRLKFQK…SPLHSLETSL (160 aa)). The tract at residues 1100 to 1117 (LRRWQILWFRGLNRIQTQ) is calmodulin-binding subdomain A. Thr-1116 is subject to Phosphothreonine; by PKC. Residues 1118–1220 (IRVVNAFRSS…SPLHSLETSL (103 aa)) are required for basolateral membrane targeting. Phosphoserine is present on residues Ser-1140 and Ser-1155. The tract at residues 1160-1220 (PLIDDTDAED…SPLHSLETSL (61 aa)) is disordered. Thr-1165 is modified (phosphothreonine). Phosphoserine; by PKA is present on Ser-1177. Ser-1178 and Ser-1182 each carry phosphoserine. A compositionally biased stretch (polar residues) spans 1200-1220 (MNKSATSSSPGSPLHSLETSL).

Belongs to the cation transport ATPase (P-type) (TC 3.A.3) family. Type IIB subfamily. In terms of assembly, monomer. Dimer. Oligomer. Calmodulin binding. Interacts with PDZD11. Interacts with SLC35G1 and STIM1. Interacts with YWHAE; interacts with the monomeric and dimeric forms of the YWHAE but prefer the monomer form; this interaction inhibits calcium-transporting ATPase activity. Interacts with NPTN; this interaction stabilizes ATP2B1 and increases ATPase activity; this interaction controls T cell calcium homeostasis following T cell activation. Interacts with EPB41; regulates small intestinal calcium absorption through regulation of membrane expression of ATP2B1. As to expression, isoform B is ubiquitously expressed and is the most predominant isoform. Isoform C is expressed at much lower levels in all tissues tested, but liver, while isoform A is found only in aorta, brain and stomach.

It localises to the cell membrane. The protein resides in the basolateral cell membrane. It is found in the synapse. Its subcellular location is the presynaptic cell membrane. The protein localises to the cytoplasmic vesicle. It localises to the secretory vesicle. The protein resides in the synaptic vesicle membrane. It catalyses the reaction Ca(2+)(in) + ATP + H2O = Ca(2+)(out) + ADP + phosphate + H(+). Catalyzes the hydrolysis of ATP coupled with the transport of calcium from the cytoplasm to the extracellular space thereby maintaining intracellular calcium homeostasis. Plays a role in blood pressure regulation through regulation of intracellular calcium concentration and nitric oxide production leading to regulation of vascular smooth muscle cells vasoconstriction. Positively regulates bone mineralization through absorption of calcium from the intestine. Plays dual roles in osteoclast differentiation and survival by regulating RANKL-induced calcium oscillations in preosteoclasts and mediating calcium extrusion in mature osteoclasts. Regulates insulin sensitivity through calcium/calmodulin signaling pathway by regulating AKT1 activation and NOS3 activation in endothelial cells. May play a role in synaptic transmission by modulating calcium and proton dynamics at the synaptic vesicles. This is Plasma membrane calcium-transporting ATPase 1 from Oryctolagus cuniculus (Rabbit).